The primary structure comprises 124 residues: Ribonuclease pancreatic (124 aa).

A compositionally biased stretch (basic and acidic residues) spans 1 to 13; that stretch reads KESAAAKFERQHM. Positions 1 to 24 are disordered; it reads KESAAAKFERQHMDPSTSSASSSN. Residues lysine 7 and arginine 10 each coordinate substrate. The active-site Proton acceptor is the histidine 12. 4 disulfides stabilise this stretch: cysteine 26-cysteine 84, cysteine 40-cysteine 95, cysteine 58-cysteine 110, and cysteine 65-cysteine 72. Substrate-binding positions include 41–45, lysine 66, and arginine 85; that span reads KPVNT. The Proton donor role is filled by histidine 119.

This sequence belongs to the pancreatic ribonuclease family. Monomer. Interacts with and forms tight 1:1 complexes with RNH1. Dimerization of two such complexes may occur. Interaction with RNH1 inhibits this protein. In terms of tissue distribution, pancreas.

The protein localises to the secreted. The enzyme catalyses an [RNA] containing cytidine + H2O = an [RNA]-3'-cytidine-3'-phosphate + a 5'-hydroxy-ribonucleotide-3'-[RNA].. It catalyses the reaction an [RNA] containing uridine + H2O = an [RNA]-3'-uridine-3'-phosphate + a 5'-hydroxy-ribonucleotide-3'-[RNA].. Functionally, endonuclease that catalyzes the cleavage of RNA on the 3' side of pyrimidine nucleotides. Acts on single-stranded and double-stranded RNA. The chain is Ribonuclease pancreatic (RNASE1) from Cervus elaphus (Red deer).